Reading from the N-terminus, the 463-residue chain is ATP-dependent protease ATPase subunit HslU (463 aa).

ATP-binding positions include Val21, 63–68 (GVGKTE), Asp276, Glu341, and Arg413.

This sequence belongs to the ClpX chaperone family. HslU subfamily. In terms of assembly, a double ring-shaped homohexamer of HslV is capped on each side by a ring-shaped HslU homohexamer. The assembly of the HslU/HslV complex is dependent on binding of ATP.

It is found in the cytoplasm. Its function is as follows. ATPase subunit of a proteasome-like degradation complex; this subunit has chaperone activity. The binding of ATP and its subsequent hydrolysis by HslU are essential for unfolding of protein substrates subsequently hydrolyzed by HslV. HslU recognizes the N-terminal part of its protein substrates and unfolds these before they are guided to HslV for hydrolysis. The polypeptide is ATP-dependent protease ATPase subunit HslU (Thermotoga petrophila (strain ATCC BAA-488 / DSM 13995 / JCM 10881 / RKU-1)).